Here is a 610-residue protein sequence, read N- to C-terminus: Glutamine--fructose-6-phosphate aminotransferase [isomerizing] (610 aa).

The active-site Nucleophile; for GATase activity is cysteine 2. Positions 2-218 constitute a Glutamine amidotransferase type-2 domain; the sequence is CGIVGAVAQR…EGDVAEMTRR (217 aa). SIS domains lie at 286-426 and 459-600; these read AAEI…QQQR and LAED…VDQP. Lysine 605 acts as the For Fru-6P isomerization activity in catalysis.

In terms of assembly, homodimer.

Its subcellular location is the cytoplasm. The enzyme catalyses D-fructose 6-phosphate + L-glutamine = D-glucosamine 6-phosphate + L-glutamate. Its function is as follows. Catalyzes the first step in hexosamine metabolism, converting fructose-6P into glucosamine-6P using glutamine as a nitrogen source. The polypeptide is Glutamine--fructose-6-phosphate aminotransferase [isomerizing] (Vibrio cholerae serotype O1 (strain ATCC 39315 / El Tor Inaba N16961)).